A 502-amino-acid chain; its full sequence is Protein ANKUB1 (502 aa).

The polypeptide is Protein ANKUB1 (ANKUB1) (Homo sapiens (Human)).